Consider the following 88-residue polypeptide: UPF0250 protein Sfri_0694 (88 aa).

This sequence belongs to the UPF0250 family.

In Shewanella frigidimarina (strain NCIMB 400), this protein is UPF0250 protein Sfri_0694.